Consider the following 387-residue polypeptide: Anhydro-N-acetylmuramic acid kinase (387 aa).

ATP is bound at residue 17–24 (GTSMDGVD).

The protein belongs to the anhydro-N-acetylmuramic acid kinase family.

It carries out the reaction 1,6-anhydro-N-acetyl-beta-muramate + ATP + H2O = N-acetyl-D-muramate 6-phosphate + ADP + H(+). It participates in amino-sugar metabolism; 1,6-anhydro-N-acetylmuramate degradation. The protein operates within cell wall biogenesis; peptidoglycan recycling. Functionally, catalyzes the specific phosphorylation of 1,6-anhydro-N-acetylmuramic acid (anhMurNAc) with the simultaneous cleavage of the 1,6-anhydro ring, generating MurNAc-6-P. Is required for the utilization of anhMurNAc either imported from the medium or derived from its own cell wall murein, and thus plays a role in cell wall recycling. The chain is Anhydro-N-acetylmuramic acid kinase from Burkholderia pseudomallei (strain 1710b).